A 248-amino-acid polypeptide reads, in one-letter code: Sperm-specific protein Don juan (248 aa).

A coiled-coil region spans residues 82–147; sequence KEGNQDELEN…EKKTKCAKKD (66 aa). The disordered stretch occupies residues 146–200; sequence KDPCKKKDPCKKKDPCKKKDPCKKKDPCKKKDPCKKKDPCKKKDPCKKKGGDLKK. Tandem repeats lie at residues 147–152, 153–158, 159–164, 165–170, 171–176, 177–182, 183–188, and 189–194. The tract at residues 147–194 is 8 X 6 AA tandem repeat of D-P-C-K-K-K; sequence DPCKKKDPCKKKDPCKKKDPCKKKDPCKKKDPCKKKDPCKKKDPCKKK. Residues 197 to 244 adopt a coiled-coil conformation; it reads DLKKKCKKLAEKEKCKKLAKKEKMKKLQKKCKKMAQKEKCKKMAKKDK.

Expression limited to post-meiotic male germ cells. Expressed in elongated spermatids during individualization and in finally elongated nuclei of spermatids. After completion of nuclear shaping it is no longer expressed in the sperm heads with the onset of individualization.

It localises to the nucleus. The protein localises to the mitochondrion. Its function is as follows. May be involved in the final steps of mitochondrial differentiation within the flagellum. This is Sperm-specific protein Don juan (dj) from Drosophila melanogaster (Fruit fly).